We begin with the raw amino-acid sequence, 275 residues long: Thiazole synthase (275 aa).

The Schiff-base intermediate with DXP role is filled by K108. 1-deoxy-D-xylulose 5-phosphate-binding positions include G169, A196–G197, and N218–T219.

It belongs to the ThiG family. Homotetramer. Forms heterodimers with either ThiH or ThiS.

It localises to the cytoplasm. The catalysed reaction is [ThiS sulfur-carrier protein]-C-terminal-Gly-aminoethanethioate + 2-iminoacetate + 1-deoxy-D-xylulose 5-phosphate = [ThiS sulfur-carrier protein]-C-terminal Gly-Gly + 2-[(2R,5Z)-2-carboxy-4-methylthiazol-5(2H)-ylidene]ethyl phosphate + 2 H2O + H(+). It functions in the pathway cofactor biosynthesis; thiamine diphosphate biosynthesis. In terms of biological role, catalyzes the rearrangement of 1-deoxy-D-xylulose 5-phosphate (DXP) to produce the thiazole phosphate moiety of thiamine. Sulfur is provided by the thiocarboxylate moiety of the carrier protein ThiS. In vitro, sulfur can be provided by H(2)S. The sequence is that of Thiazole synthase from Ralstonia nicotianae (strain ATCC BAA-1114 / GMI1000) (Ralstonia solanacearum).